Consider the following 92-residue polypeptide: Small ribosomal subunit protein uS19c (92 aa).

Belongs to the universal ribosomal protein uS19 family.

It is found in the plastid. It localises to the chloroplast. In terms of biological role, protein S19 forms a complex with S13 that binds strongly to the 16S ribosomal RNA. The chain is Small ribosomal subunit protein uS19c from Piper cenocladum (Ant piper).